The following is a 233-amino-acid chain: Purine nucleoside phosphorylase DeoD-type (233 aa).

Histidine 4 is an a purine D-ribonucleoside binding site. Residues glycine 20, arginine 24, arginine 43, and 87–90 (RIGT) contribute to the phosphate site. Residues 179 to 181 (EME) and 203 to 204 (SD) contribute to the a purine D-ribonucleoside site. Aspartate 204 serves as the catalytic Proton donor.

It belongs to the PNP/UDP phosphorylase family. As to quaternary structure, homohexamer; trimer of homodimers.

The enzyme catalyses a purine D-ribonucleoside + phosphate = a purine nucleobase + alpha-D-ribose 1-phosphate. The catalysed reaction is a purine 2'-deoxy-D-ribonucleoside + phosphate = a purine nucleobase + 2-deoxy-alpha-D-ribose 1-phosphate. Functionally, catalyzes the reversible phosphorolytic breakdown of the N-glycosidic bond in the beta-(deoxy)ribonucleoside molecules, with the formation of the corresponding free purine bases and pentose-1-phosphate. This is Purine nucleoside phosphorylase DeoD-type from Thermoanaerobacter pseudethanolicus (strain ATCC 33223 / 39E) (Clostridium thermohydrosulfuricum).